A 161-amino-acid polypeptide reads, in one-letter code: Putative pre-16S rRNA nuclease (161 aa).

This sequence belongs to the YqgF nuclease family.

The protein localises to the cytoplasm. Functionally, could be a nuclease involved in processing of the 5'-end of pre-16S rRNA. This chain is Putative pre-16S rRNA nuclease, found in Prochlorococcus marinus (strain MIT 9313).